The primary structure comprises 156 residues: Small ribosomal subunit protein uS7 (156 aa).

The protein belongs to the universal ribosomal protein uS7 family. Part of the 30S ribosomal subunit. Contacts proteins S9 and S11.

Functionally, one of the primary rRNA binding proteins, it binds directly to 16S rRNA where it nucleates assembly of the head domain of the 30S subunit. Is located at the subunit interface close to the decoding center, probably blocks exit of the E-site tRNA. The chain is Small ribosomal subunit protein uS7 from Bordetella petrii (strain ATCC BAA-461 / DSM 12804 / CCUG 43448).